The sequence spans 270 residues: Phosphatidylglycerol--prolipoprotein diacylglyceryl transferase (270 aa).

3 consecutive transmembrane segments (helical) span residues 17–37 (LAIH…MFLG), 63–83 (ILFL…CLFY), and 95–115 (IFYI…VIAS). An a 1,2-diacyl-sn-glycero-3-phospho-(1'-sn-glycerol)-binding site is contributed by Arg-146. 3 helical membrane passes run 182–202 (SQVY…WLYA), 209–229 (GEVA…AEYF), and 243–263 (MSMG…LWVW).

The protein belongs to the Lgt family.

It localises to the cell inner membrane. The enzyme catalyses L-cysteinyl-[prolipoprotein] + a 1,2-diacyl-sn-glycero-3-phospho-(1'-sn-glycerol) = an S-1,2-diacyl-sn-glyceryl-L-cysteinyl-[prolipoprotein] + sn-glycerol 1-phosphate + H(+). It participates in protein modification; lipoprotein biosynthesis (diacylglyceryl transfer). Its function is as follows. Catalyzes the transfer of the diacylglyceryl group from phosphatidylglycerol to the sulfhydryl group of the N-terminal cysteine of a prolipoprotein, the first step in the formation of mature lipoproteins. The sequence is that of Phosphatidylglycerol--prolipoprotein diacylglyceryl transferase from Paracidovorax citrulli (strain AAC00-1) (Acidovorax citrulli).